The sequence spans 368 residues: Zinc finger protein 24 (368 aa).

A Glycyl lysine isopeptide (Lys-Gly) (interchain with G-Cter in SUMO2) cross-link involves residue K22. Residue K27 forms a Glycyl lysine isopeptide (Lys-Gly) (interchain with G-Cter in SUMO1); alternate linkage. A Glycyl lysine isopeptide (Lys-Gly) (interchain with G-Cter in SUMO2); alternate cross-link involves residue K27. In terms of domain architecture, SCAN box spans 52–134 (RQRFRQFGYQ…TVLEDLESEL (83 aa)). 2 positions are modified to phosphoserine: S132 and S142. Residues K147, K177, and K236 each participate in a glycyl lysine isopeptide (Lys-Gly) (interchain with G-Cter in SUMO2) cross-link. A C2H2-type 1 zinc finger spans residues 251–273 (HICDECGKHFSQGSALILHQRIH). The necessary and sufficient for nuclear localization stretch occupies residues 251–301 (HICDECGKHFSQGSALILHQRIHSGEKPYGCVECGKAFSRSSILVQHQRVH). S274 carries the phosphoserine modification. Residues K277 and K286 each participate in a glycyl lysine isopeptide (Lys-Gly) (interchain with G-Cter in SUMO2) cross-link. 3 consecutive C2H2-type zinc fingers follow at residues 279–301 (YGCV…QRVH), 307–329 (YKCL…QRIH), and 335–357 (YECV…XXXH). Phosphoserine is present on S292. Y335 carries the phosphotyrosine modification. Residues K361 and K367 each participate in a glycyl lysine isopeptide (Lys-Gly) (interchain with G-Cter in SUMO2) cross-link.

The protein belongs to the krueppel C2H2-type zinc-finger protein family. Post-translationally, sumoylated.

The protein localises to the nucleus. In terms of biological role, transcription factor required for myelination of differentiated oligodendrocytes. Required for the conversion of oligodendrocytes from the premyelinating to the myelinating state. In the developing central nervous system (CNS), involved in the maintenance in the progenitor stage by promoting the cell cycle. Specifically binds to the 5'-TCAT-3' DNA sequence. Has transcription repressor activity in vitro. The sequence is that of Zinc finger protein 24 (ZNF24) from Pan paniscus (Pygmy chimpanzee).